The chain runs to 238 residues: Fatty acid metabolism regulator protein (238 aa).

Positions 6–74 constitute an HTH gntR-type domain; the sequence is QSPAGFAEEY…HGKPTKVNNF (69 aa). Residues 34–53 constitute a DNA-binding region (H-T-H motif); the sequence is ERELSELIGVTRTTLREVLQ.

Homodimer.

It is found in the cytoplasm. In terms of biological role, multifunctional regulator of fatty acid metabolism. The sequence is that of Fatty acid metabolism regulator protein from Erwinia tasmaniensis (strain DSM 17950 / CFBP 7177 / CIP 109463 / NCPPB 4357 / Et1/99).